A 501-amino-acid chain; its full sequence is ATP synthase subunit alpha (501 aa).

169–176 (GDRQTGKT) serves as a coordination point for ATP.

This sequence belongs to the ATPase alpha/beta chains family. In terms of assembly, F-type ATPases have 2 components, CF(1) - the catalytic core - and CF(0) - the membrane proton channel. CF(1) has five subunits: alpha(3), beta(3), gamma(1), delta(1), epsilon(1). CF(0) has three main subunits: a(1), b(2) and c(9-12). The alpha and beta chains form an alternating ring which encloses part of the gamma chain. CF(1) is attached to CF(0) by a central stalk formed by the gamma and epsilon chains, while a peripheral stalk is formed by the delta and b chains.

The protein resides in the cell membrane. It catalyses the reaction ATP + H2O + 4 H(+)(in) = ADP + phosphate + 5 H(+)(out). Its function is as follows. Produces ATP from ADP in the presence of a proton gradient across the membrane. The alpha chain is a regulatory subunit. The chain is ATP synthase subunit alpha from Streptococcus pneumoniae serotype 19F (strain G54).